The following is a 75-amino-acid chain: MNFEEMMKELEEIVNRLENEDLPLEESIKLFERGVELYRKCKEILQQNRLKIIDVMKELEGEIDASGRDQENELR.

Belongs to the XseB family. As to quaternary structure, heterooligomer composed of large and small subunits.

The protein resides in the cytoplasm. It carries out the reaction Exonucleolytic cleavage in either 5'- to 3'- or 3'- to 5'-direction to yield nucleoside 5'-phosphates.. Functionally, bidirectionally degrades single-stranded DNA into large acid-insoluble oligonucleotides, which are then degraded further into small acid-soluble oligonucleotides. The chain is Exodeoxyribonuclease 7 small subunit from Thermotoga maritima (strain ATCC 43589 / DSM 3109 / JCM 10099 / NBRC 100826 / MSB8).